We begin with the raw amino-acid sequence, 116 residues long: Dynein light chain Tctex-type 3 (116 aa).

A 3'-nitrotyrosine modification is found at tyrosine 4.

Belongs to the dynein light chain Tctex-type family. As to quaternary structure, homodimer. The cytoplasmic dynein 1 complex consists of two catalytic heavy chains (HCs) and a number of non-catalytic subunits presented by intermediate chains (ICs), light intermediate chains (LICs) and light chains (LCs); the composition seems to vary in respect to the IC, LIC and LC composition. The heavy chain homodimer serves as a scaffold for the probable homodimeric assembly of the respective non-catalytic subunits. The ICs and LICs bind directly to the HC dimer and the LCs assemble on the IC dimer. DYNLT1 and DYNLT3 compete for association with dynein IC (DYNC1I1 or DYNC1I2). Self-associates. Interacts with DYNC1I1 and DYNC1I2. Interacts with BUB3. Interacts with SATB1 in nucleus to form complex with matrix attachment regions (MARs) of DNA.

The protein localises to the nucleus. It is found in the cytoplasm. It localises to the cytoskeleton. The protein resides in the chromosome. Its subcellular location is the centromere. The protein localises to the kinetochore. Functionally, acts as one of several non-catalytic accessory components of the cytoplasmic dynein 1 complex that are thought to be involved in linking dynein to cargos and to adapter proteins that regulate dynein function. Cytoplasmic dynein 1 acts as a motor for the intracellular retrograde motility of vesicles and organelles along microtubules. Probably binds BUB3 as part of transport cargo. Required for the efficient progression through mitosis. The polypeptide is Dynein light chain Tctex-type 3 (DYNLT3) (Canis lupus familiaris (Dog)).